A 154-amino-acid polypeptide reads, in one-letter code: Endoribonuclease YbeY (154 aa).

Zn(2+) contacts are provided by His-113, His-117, and His-123.

This sequence belongs to the endoribonuclease YbeY family. The cofactor is Zn(2+).

Its subcellular location is the cytoplasm. Functionally, single strand-specific metallo-endoribonuclease involved in late-stage 70S ribosome quality control and in maturation of the 3' terminus of the 16S rRNA. This Ehrlichia chaffeensis (strain ATCC CRL-10679 / Arkansas) protein is Endoribonuclease YbeY.